The sequence spans 170 residues: Transcriptional repressor NrdR (170 aa).

Residues 3-34 (CPFCRHPDSRVVDSRVTDDGTAIRRRRSCPEC) fold into a zinc finger. Residues 46–136 (LSVIKRSGVI…VYRGFESLED (91 aa)) enclose the ATP-cone domain. The segment at 151–170 (ERSETVERGRPVPSRGVDDR) is disordered.

This sequence belongs to the NrdR family. Requires Zn(2+) as cofactor.

Functionally, negatively regulates transcription of bacterial ribonucleotide reductase nrd genes and operons by binding to NrdR-boxes. This Acidothermus cellulolyticus (strain ATCC 43068 / DSM 8971 / 11B) protein is Transcriptional repressor NrdR.